A 131-amino-acid chain; its full sequence is MSMRRSKAEGKRSLRELSEEEEEEEETEDEDTFEEEEALEKKQKGKATSSSGVCQVESCTADMSKAKQYHKRHKVCQFHAKAPHVRISGLHQRFCQQCSRFHALSEFDEAKRSCRRRLAGHNERRRKSTTD.

Residues 1–17 are compositionally biased toward basic and acidic residues; it reads MSMRRSKAEGKRSLREL. Residues 1 to 54 form a disordered region; the sequence is MSMRRSKAEGKRSLRELSEEEEEEEETEDEDTFEEEEALEKKQKGKATSSSGVC. The span at 18 to 38 shows a compositional bias: acidic residues; sequence SEEEEEEEETEDEDTFEEEEA. The sufficient and necessary for DNA binding stretch occupies residues 45–129; it reads GKATSSSGVC…GHNERRRKST (85 aa). Residues 51-128 form an SBP-type zinc finger; sequence SGVCQVESCT…AGHNERRRKS (78 aa). The Zn(2+) site is built by cysteine 54, cysteine 59, cysteine 76, histidine 79, cysteine 95, cysteine 98, histidine 102, and cysteine 114. The Bipartite nuclear localization signal motif lies at 111 to 127; sequence KRSCRRRLAGHNERRRK.

Zn(2+) is required as a cofactor. As to expression, expressed in vegetative and inflorescence apical meristems, floral meristems, leaf and flower organ primordia, inflorescence stem tissue and to lower extent in roots.

It localises to the nucleus. The protein localises to the cytoplasm. In terms of biological role, trans-acting factor that binds specifically to the consensus nucleotide sequence 5'-TNCGTACAA-3' of AP1 promoter. Binds specifically to the 5'-GTAC-3' core sequence. Promotes both vegetative phase change and flowering. Regulates phase-specific patterns of leaf epidermal differentiation and flowering time, but does not seem to affect leaf shape. This chain is Squamosa promoter-binding-like protein 3 (SPL3), found in Arabidopsis thaliana (Mouse-ear cress).